The following is a 1445-amino-acid chain: ABC-type transporter FGSG_00046 (1445 aa).

Transmembrane regions (helical) follow at residues 21–41 (LFEE…MLLV), 77–97 (LILW…AAAL), 119–138 (PSSL…VTRV), 150–170 (ISIL…FESL), 187–207 (EIVG…FILG), 255–277 (TLLR…PLLL), 297–317 (YGLI…TALA), 368–388 (LQFV…IFLL), 392–412 (VALG…GTVL), 481–501 (VFST…YVLM), and 520–540 (SLFS…PAIF). The 283-residue stretch at 259-541 (GGLCRLFTAL…FLTSVPAIFS (283 aa)) folds into the ABC transmembrane type-1 1 domain. In terms of domain architecture, ABC transporter 1 spans 595–821 (IRDGSVRWKG…DEIEASTYSR (227 aa)). Residue 627-634 (GSVGSGKS) participates in ATP binding. The disordered stretch occupies residues 803–850 (RNTQKDMQDDEIEASTYSREQNGPKKQEEDANHESNQSPETSQEHELA). Residues 824–835 (NGPKKQEEDANH) show a composition bias toward basic and acidic residues. The next 6 helical transmembrane spans lie at 868 to 888 (GMGF…WQNF), 912 to 932 (IGVY…VTWF), 1004 to 1024 (IPLT…QLVM), 1026 to 1046 (SIGT…LAII), 1116 to 1136 (LTLV…GVTI), and 1147 to 1167 (IGLA…LLTW). Residues 974–1173 (HRAPMSYFES…LLTWWTMMEA (200 aa)) form the ABC transmembrane type-1 2 domain. The ABC transporter 2 domain maps to 1210–1441 (IELKELSASY…DVSLFQDLFS (232 aa)). An ATP-binding site is contributed by 1244–1251 (GRTGSGKT).

This sequence belongs to the ABC transporter superfamily. ABCC family.

It localises to the cell membrane. Its function is as follows. ABC-type transporter; part of the gene cluster that mediates the biosynthesis of gramillins A and B, bicyclic lipopeptides that induce cell death in maize leaves but not in wheat leaves. May be involved in the secretion of gramillins. The protein is ABC-type transporter FGSG_00046 of Gibberella zeae (strain ATCC MYA-4620 / CBS 123657 / FGSC 9075 / NRRL 31084 / PH-1) (Wheat head blight fungus).